Reading from the N-terminus, the 666-residue chain is Polyamine deacetylase HDAC10 (666 aa).

Residues 1 to 323 form a histone deacetylase region; sequence MGTALVYHED…VCMMVQTLLG (323 aa). Residue His135 is part of the active site.

Belongs to the histone deacetylase family. HD type 2 subfamily. Interacts with HDAC3. Interacts with HDAC2 and NCOR2/SMRT. Interacts with HSPA8/HSC70. Interacts with MSH2. Widely expressed.

The protein resides in the cytoplasm. Its subcellular location is the nucleus. The enzyme catalyses N(8)-acetylspermidine + H2O = spermidine + acetate. It carries out the reaction N-acetylputrescine + H2O = putrescine + acetate. The catalysed reaction is N-acetylcadaverine + H2O = cadaverine + acetate. It catalyses the reaction N(6)-acetyl-L-lysyl-[protein] + H2O = L-lysyl-[protein] + acetate. Polyamine deacetylase (PDAC), which acts preferentially on N(8)-acetylspermidine, and also on acetylcadaverine and acetylputrescine. Exhibits attenuated catalytic activity toward N(1),N(8)-diacetylspermidine and very low activity, if any, toward N(1)-acetylspermidine. Histone deacetylase activity has been observed in vitro. Has also been shown to be involved in MSH2 deacetylation. The physiological relevance of protein/histone deacetylase activity is unclear and could be very weak. May play a role in the promotion of late stages of autophagy, possibly autophagosome-lysosome fusion and/or lysosomal exocytosis in neuroblastoma cells. May play a role in homologous recombination. May promote DNA mismatch repair. This chain is Polyamine deacetylase HDAC10 (Hdac10), found in Mus musculus (Mouse).